The following is a 449-amino-acid chain: AP-4 complex subunit mu-1 (449 aa).

The MHD domain maps to 184-448; that stretch reads KNEVFLDVVE…LSHSNAYVIR (265 aa).

It belongs to the adaptor complexes medium subunit family. As to quaternary structure, adaptor protein complex 4 (AP-4) is a heterotetramer composed of two large adaptins (epsilon-type subunit AP4E1 and beta-type subunit AP4B1), a medium adaptin (mu-type subunit AP4M1) and a small adaptin (sigma-type AP4S1). Interacts with tyrosine-based sorting signals on the cytoplasmic tail of cargo proteins such as APP, ATG9A, LAMP2 and NAGPA. Interacts with the C-terminal domain of GRID2. Interacts with GRIA1 and GRIA2; the interaction is indirect via CACNG3. Interacts with CACNG3; CACNG3 associates GRIA1 and GRIA2 with the adaptor protein complex 4 (AP-4) to target them to the somatodendritic compartment of neurons. Interacts with HOOK1 and HOOK2; the interactions are direct, mediate the interaction between FTS-Hook-FHIP (FHF) complex and AP-4 and the perinuclear distribution of AP-4.

Its subcellular location is the golgi apparatus. It localises to the trans-Golgi network membrane. The protein resides in the early endosome. Functionally, component of the adaptor protein complex 4 (AP-4). Adaptor protein complexes are vesicle coat components involved both in vesicle formation and cargo selection. They control the vesicular transport of proteins in different trafficking pathways. AP-4 forms a non clathrin-associated coat on vesicles departing the trans-Golgi network (TGN) and may be involved in the targeting of proteins from the trans-Golgi network (TGN) to the endosomal-lysosomal system. It is also involved in protein sorting to the basolateral membrane in epithelial cells and the proper asymmetric localization of somatodendritic proteins in neurons. Within AP-4, the mu-type subunit AP4M1 is directly involved in the recognition and binding of tyrosine-based sorting signals found in the cytoplasmic part of cargos. The adaptor protein complex 4 (AP-4) may also recognize other types of sorting signal. The chain is AP-4 complex subunit mu-1 from Mus musculus (Mouse).